We begin with the raw amino-acid sequence, 758 residues long: 1-phosphatidylinositol 4,5-bisphosphate phosphodiesterase delta-4 (758 aa).

The region spanning 16–124 is the PH domain; it reads QLMQAGSPMR…WIQGLEKLIE (109 aa). The substrate binding stretch occupies residues 26 to 53; it reads KVKSRSWKKQRYFKLQEDCMTIWYNSKK. EF-hand domains are found at residues 134–169, 170–205, and 206–237; these read LMDQWICDWFQKADKNKDGRMNFKEVQDLLKMMNVD, MSEHHAFRLFQMADKSESGTLEGEEFVLFYKALTQR, and DEVLKIFQDFSKDGKKLTLLEFVDFLQQGQLE. Positions 147, 149, 151, 153, 158, 183, 185, 187, 189, and 194 each coordinate Ca(2+). The GBA signature appears at 213–243; sequence QDFSKDGKKLTLLEFVDFLQQGQLEEENTEE. The region spanning 290-435 is the PI-PLC X-box domain; that stretch reads QDMMQPLCHY…LRGKILLKGK (146 aa). His305 is a catalytic residue. Positions 306, 335, and 337 each coordinate Ca(2+). The active site involves His350. Residue Glu384 coordinates Ca(2+). 2 residues coordinate substrate: Lys433 and Lys435. A compositionally biased stretch (acidic residues) spans 446–468; sequence EQPDDSLGEVSDEEENIEVEEER. A disordered region spans residues 446 to 479; the sequence is EQPDDSLGEVSDEEENIEVEEERNEDKKRAKKSK. Positions 486–602 constitute a PI-PLC Y-box domain; sequence LSDCVIYCKS…GYVLKPSFMR (117 aa). Positions 515 and 542 each coordinate substrate. Residues 602-731 form the C2 domain; sequence RHVETTFNPD…SGYRHIHLLS (130 aa). Ca(2+)-binding residues include Ile645, Asp647, Asn671, Asp700, Tyr701, and Asp702. A PDZ-binding motif is present at residues 726–729; it reads HIHL.

Ca(2+) is required as a cofactor.

The protein localises to the membrane. It is found in the nucleus. It localises to the cytoplasm. Its subcellular location is the endoplasmic reticulum. The catalysed reaction is a 1,2-diacyl-sn-glycero-3-phospho-(1D-myo-inositol-4,5-bisphosphate) + H2O = 1D-myo-inositol 1,4,5-trisphosphate + a 1,2-diacyl-sn-glycerol + H(+). The enzyme catalyses a 1,2-diacyl-sn-glycero-3-phospho-(1D-myo-inositol) + H2O = 1D-myo-inositol 1-phosphate + a 1,2-diacyl-sn-glycerol + H(+). Hydrolyzes the phosphatidylinositol 4,5-bisphosphate (PIP2) to generate 2 second messenger molecules diacylglycerol (DAG) and inositol 1,4,5-trisphosphate (IP3). DAG mediates the activation of protein kinase C (PKC), while IP3 releases Ca(2+) from intracellular stores. This chain is 1-phosphatidylinositol 4,5-bisphosphate phosphodiesterase delta-4 (plcd4), found in Xenopus laevis (African clawed frog).